The sequence spans 523 residues: MAAVAVAVREDSGSGMKAELSARPGAGGKEMTQEEKLQLRKEKKQQKKKRKEEKGTDVDTASAVSAAQCPGPAREAPGPGSQSSTPGEKVPAGRTKAELRAERRAKQEAERALKQARKGEQGGPPPQASPSTAGEAPAGGKRLTEHTQADDPTLLRRLVRKSERQQVPTRKDYGSKVSLFSHLPQYSRQNSLTQYMSIPSSVIHPAMVRLGLQYSQGLISGSNARCIALLRALQQVIQDYTTPPNEELSRDLVNKLKPYICFLTQCRPLSASMYNAIKFLNKEITGVSSTKREEEAKAELQAAADRYVQEKIVLAAQAILRFASKKISNGDVILVYGCSSLVSRILQEAWSEGRKFRVVVVDSRPRLEGRHMLRFLVRAGVPASYLLIPAASYVLPEVSKVLLGAHALLANGSVMSRVGTAQLALVARAHNVPVLVCCETYKFCERVQTDAFVSNELDDPDDLQCERGDHVALANWQSHPSLRLLNLVYDVTPPELVDLVITELGMIPCSSVPVVLRVKSSDQ.

The disordered stretch occupies residues 1-154; it reads MAAVAVAVRE…EHTQADDPTL (154 aa). Alanine 2 is modified (N-acetylalanine). A Phosphoserine modification is found at serine 12. The segment covering 31–40 has biased composition (basic and acidic residues); that stretch reads MTQEEKLQLR. Residues 41–51 are compositionally biased toward basic residues; that stretch reads KEKKQQKKKRK. Threonine 85 carries the phosphothreonine modification. Basic and acidic residues predominate over residues 95–120; that stretch reads TKAELRAERRAKQEAERALKQARKGE. Serine 129 is subject to Phosphoserine. The may bind the chemical integrated stress response (ISR) inhibitor ISRIB stretch occupies residues 170–179; the sequence is RKDYGSKVSL.

Belongs to the eIF-2B alpha/beta/delta subunits family. Component of the translation initiation factor 2B (eIF2B) complex which is a heterodecamer of two sets of five different subunits: alpha, beta, gamma, delta and epsilon. Subunits alpha, beta and delta comprise a regulatory subcomplex and subunits epsilon and gamma comprise a catalytic subcomplex. Within the complex, the hexameric regulatory complex resides at the center, with the two heterodimeric catalytic subcomplexes bound on opposite sides.

It localises to the cytoplasm. The protein resides in the cytosol. Activated by the chemical integrated stress response (ISR) inhibitor ISRIB which stimulates guanine nucleotide exchange factor activity for both phosphorylated and unphosphorylated eIF2. Acts as a component of the translation initiation factor 2B (eIF2B) complex, which catalyzes the exchange of GDP for GTP on eukaryotic initiation factor 2 (eIF2) gamma subunit. Its guanine nucleotide exchange factor activity is repressed when bound to eIF2 complex phosphorylated on the alpha subunit, thereby limiting the amount of methionyl-initiator methionine tRNA available to the ribosome and consequently global translation is repressed. In Oryctolagus cuniculus (Rabbit), this protein is Translation initiation factor eIF2B subunit delta (EIF2B4).